Here is a 169-residue protein sequence, read N- to C-terminus: Cytochrome c-type biogenesis protein CcmE (169 aa).

Residues 1–7 (MTRKSRR) are Cytoplasmic-facing. A helical; Signal-anchor for type II membrane protein transmembrane segment spans residues 8 to 28 (LILIAACGAVLALALGLILSA). Residues 29 to 169 (MSGSIVFFRS…DATLGQRSER (141 aa)) lie on the Periplasmic side of the membrane. Heme contacts are provided by H122 and Y126. Residues 135–169 (LKAQGRWQEGGGKEAPKDAAKPASADATLGQRSER) are disordered. Positions 145 to 154 (GGKEAPKDAA) are enriched in basic and acidic residues.

It belongs to the CcmE/CycJ family.

The protein localises to the cell inner membrane. Its function is as follows. Heme chaperone required for the biogenesis of c-type cytochromes. Transiently binds heme delivered by CcmC and transfers the heme to apo-cytochromes in a process facilitated by CcmF and CcmH. This chain is Cytochrome c-type biogenesis protein CcmE, found in Methylorubrum populi (strain ATCC BAA-705 / NCIMB 13946 / BJ001) (Methylobacterium populi).